Reading from the N-terminus, the 266-residue chain is uncharacterized protein (266 aa).

4 helical membrane passes run I9 to P29, G79 to F99, L122 to G142, and G193 to I213.

The protein resides in the membrane. This is an uncharacterized protein from Dictyostelium discoideum (Social amoeba).